A 424-amino-acid chain; its full sequence is Serine--tRNA ligase (424 aa).

231–233 lines the L-serine pocket; the sequence is TAE. 262 to 264 serves as a coordination point for ATP; sequence RSE. E285 provides a ligand contact to L-serine. ATP is bound at residue 349 to 352; that stretch reads EISS. S385 provides a ligand contact to L-serine.

Belongs to the class-II aminoacyl-tRNA synthetase family. Type-1 seryl-tRNA synthetase subfamily. In terms of assembly, homodimer. The tRNA molecule binds across the dimer.

It localises to the cytoplasm. The catalysed reaction is tRNA(Ser) + L-serine + ATP = L-seryl-tRNA(Ser) + AMP + diphosphate + H(+). It catalyses the reaction tRNA(Sec) + L-serine + ATP = L-seryl-tRNA(Sec) + AMP + diphosphate + H(+). It participates in aminoacyl-tRNA biosynthesis; selenocysteinyl-tRNA(Sec) biosynthesis; L-seryl-tRNA(Sec) from L-serine and tRNA(Sec): step 1/1. Functionally, catalyzes the attachment of serine to tRNA(Ser). Is also able to aminoacylate tRNA(Sec) with serine, to form the misacylated tRNA L-seryl-tRNA(Sec), which will be further converted into selenocysteinyl-tRNA(Sec). This is Serine--tRNA ligase from Marinobacter nauticus (strain ATCC 700491 / DSM 11845 / VT8) (Marinobacter aquaeolei).